Reading from the N-terminus, the 180-residue chain is Large ribosomal subunit protein uL5 (180 aa).

It belongs to the universal ribosomal protein uL5 family. In terms of assembly, part of the 50S ribosomal subunit; part of the 5S rRNA/L5/L18/L25 subcomplex. Contacts the 5S rRNA and the P site tRNA. Forms a bridge to the 30S subunit in the 70S ribosome.

Functionally, this is one of the proteins that bind and probably mediate the attachment of the 5S RNA into the large ribosomal subunit, where it forms part of the central protuberance. In the 70S ribosome it contacts protein S13 of the 30S subunit (bridge B1b), connecting the 2 subunits; this bridge is implicated in subunit movement. Contacts the P site tRNA; the 5S rRNA and some of its associated proteins might help stabilize positioning of ribosome-bound tRNAs. This chain is Large ribosomal subunit protein uL5, found in Xanthomonas oryzae pv. oryzae (strain MAFF 311018).